Reading from the N-terminus, the 288-residue chain is THO complex subunit 4D (288 aa).

The interval M1–P55 is disordered. S2 is modified (N-acetylserine). In terms of domain architecture, RRM spans T93 to G170. Positions Q201 to S288 are disordered. The span at Q232 to G260 shows a compositional bias: gly residues. Positions K264–H281 are enriched in basic and acidic residues.

It belongs to the ALYREF family. In terms of assembly, interacts with PARP1. Interacts with EIF4A3.

Its subcellular location is the nucleus. The protein localises to the nucleoplasm. It is found in the nucleolus. Functionally, export adapter involved in nuclear export of spliced and unspliced mRNA. Plays a role in disease resistance. Mediates multiple defense responses triggered by NEP1, including stomatal closure, hypersensitive cell death (HCD) and defense-related gene expression. This is THO complex subunit 4D from Arabidopsis thaliana (Mouse-ear cress).